The sequence spans 407 residues: Biotin synthase (407 aa).

One can recognise a Radical SAM core domain in the interval 47–277; it reads WFGRRVKLNY…DVEVRIAGGR (231 aa). Residues Cys-65, Cys-69, and Cys-72 each coordinate [4Fe-4S] cluster. Cys-109, Cys-142, Cys-202, and Arg-272 together coordinate [2Fe-2S] cluster. A disordered region spans residues 368-407; that stretch reads GGGVCAPAPAATTPRPAEEPRTDLVAVRRRGAGTDLAPNA. Over residues 373-382 the composition is skewed to low complexity; it reads APAPAATTPR.

The protein belongs to the radical SAM superfamily. Biotin synthase family. In terms of assembly, homodimer. Requires [4Fe-4S] cluster as cofactor. [2Fe-2S] cluster is required as a cofactor.

It carries out the reaction (4R,5S)-dethiobiotin + (sulfur carrier)-SH + 2 reduced [2Fe-2S]-[ferredoxin] + 2 S-adenosyl-L-methionine = (sulfur carrier)-H + biotin + 2 5'-deoxyadenosine + 2 L-methionine + 2 oxidized [2Fe-2S]-[ferredoxin]. Its pathway is cofactor biosynthesis; biotin biosynthesis; biotin from 7,8-diaminononanoate: step 2/2. Functionally, catalyzes the conversion of dethiobiotin (DTB) to biotin by the insertion of a sulfur atom into dethiobiotin via a radical-based mechanism. This Streptomyces coelicolor (strain ATCC BAA-471 / A3(2) / M145) protein is Biotin synthase.